The sequence spans 221 residues: Peptide methionine sulfoxide reductase MsrA (221 aa).

Residue cysteine 54 is part of the active site.

Belongs to the MsrA Met sulfoxide reductase family.

The enzyme catalyses L-methionyl-[protein] + [thioredoxin]-disulfide + H2O = L-methionyl-(S)-S-oxide-[protein] + [thioredoxin]-dithiol. The catalysed reaction is [thioredoxin]-disulfide + L-methionine + H2O = L-methionine (S)-S-oxide + [thioredoxin]-dithiol. In terms of biological role, has an important function as a repair enzyme for proteins that have been inactivated by oxidation. Catalyzes the reversible oxidation-reduction of methionine sulfoxide in proteins to methionine. In Methylobacterium nodulans (strain LMG 21967 / CNCM I-2342 / ORS 2060), this protein is Peptide methionine sulfoxide reductase MsrA.